Consider the following 334-residue polypeptide: S-adenosylmethionine decarboxylase proenzyme 1 (334 aa).

Residue F7 coordinates substrate. Residues E8 and E11 contribute to the active site. E67 provides a ligand contact to substrate. Catalysis depends on S68, which acts as the Schiff-base intermediate with substrate; via pyruvic acid. Pyruvic acid (Ser); by autocatalysis is present on S68. Catalysis depends on C82, which acts as the Proton donor; for catalytic activity. F223 lines the substrate pocket. Residues S229 and H243 each act as proton acceptor; for processing activity in the active site. E247 serves as a coordination point for substrate. A Phosphoserine modification is found at S298.

Belongs to the eukaryotic AdoMetDC family. Heterotetramer of two alpha and two beta chains. It depends on pyruvate as a cofactor. In terms of processing, is synthesized initially as an inactive proenzyme. Formation of the active enzyme involves a self-maturation process in which the active site pyruvoyl group is generated from an internal serine residue via an autocatalytic post-translational modification. Two non-identical subunits are generated from the proenzyme in this reaction, and the pyruvate is formed at the N-terminus of the alpha chain, which is derived from the carboxyl end of the proenzyme. The post-translation cleavage follows an unusual pathway, termed non-hydrolytic serinolysis, in which the side chain hydroxyl group of the serine supplies its oxygen atom to form the C-terminus of the beta chain, while the remainder of the serine residue undergoes an oxidative deamination to produce ammonia and the pyruvoyl group blocking the N-terminus of the alpha chain. In terms of tissue distribution, expressed in embryonic stem cells; subsequently down-regulated in differentiating neural precursor cells.

The enzyme catalyses S-adenosyl-L-methionine + H(+) = S-adenosyl 3-(methylsulfanyl)propylamine + CO2. Its pathway is amine and polyamine biosynthesis; S-adenosylmethioninamine biosynthesis; S-adenosylmethioninamine from S-adenosyl-L-methionine: step 1/1. Functionally, essential for biosynthesis of the polyamines spermidine and spermine. Promotes maintenance and self-renewal of embryonic stem cells, by maintaining spermine levels. In Mus musculus (Mouse), this protein is S-adenosylmethionine decarboxylase proenzyme 1 (Amd1).